We begin with the raw amino-acid sequence, 254 residues long: Ribonuclease PH (254 aa).

Residues arginine 86 and 124 to 126 contribute to the phosphate site; that span reads GTR.

The protein belongs to the RNase PH family. Homohexameric ring arranged as a trimer of dimers.

The catalysed reaction is tRNA(n+1) + phosphate = tRNA(n) + a ribonucleoside 5'-diphosphate. In terms of biological role, phosphorolytic 3'-5' exoribonuclease that plays an important role in tRNA 3'-end maturation. Removes nucleotide residues following the 3'-CCA terminus of tRNAs; can also add nucleotides to the ends of RNA molecules by using nucleoside diphosphates as substrates, but this may not be physiologically important. Probably plays a role in initiation of 16S rRNA degradation (leading to ribosome degradation) during starvation. The sequence is that of Ribonuclease PH from Carboxydothermus hydrogenoformans (strain ATCC BAA-161 / DSM 6008 / Z-2901).